Reading from the N-terminus, the 529-residue chain is Peptide chain release factor 3 (529 aa).

In terms of domain architecture, tr-type G spans 11 to 280 (NKRRTFAIIS…GLVKWAPAPM (270 aa)). GTP-binding positions include 20 to 27 (SHPDAGKT), 88 to 92 (DTPGH), and 142 to 145 (NKLD).

Belongs to the TRAFAC class translation factor GTPase superfamily. Classic translation factor GTPase family. PrfC subfamily.

It localises to the cytoplasm. Functionally, increases the formation of ribosomal termination complexes and stimulates activities of RF-1 and RF-2. It binds guanine nucleotides and has strong preference for UGA stop codons. It may interact directly with the ribosome. The stimulation of RF-1 and RF-2 is significantly reduced by GTP and GDP, but not by GMP. This chain is Peptide chain release factor 3, found in Proteus mirabilis (strain HI4320).